The sequence spans 189 residues: GTPase NRas (189 aa).

Residue 10-17 coordinates GTP; that stretch reads GAGGVGKS. Positions 32–40 match the Effector region motif; sequence YDPTIEDSY. Residues 57-61 and 116-119 contribute to the GTP site; these read DTAGQ and NKCD. Residues 166 to 185 form a hypervariable region region; the sequence is YRMKKLNSNEDGNQGCMGLS. A lipid anchor (S-palmitoyl cysteine) is attached at Cys181. Cys186 carries S-farnesyl cysteine lipidation. The propeptide at 187-189 is removed in mature form; the sequence is IVM.

This sequence belongs to the small GTPase superfamily. Ras family. In terms of processing, palmitoylated by the ZDHHC9-GOLGA7 complex. Depalmitoylated by ABHD17A, ABHD17B and ABHD17C. A continuous cycle of de- and re-palmitoylation regulates rapid exchange between plasma membrane and Golgi.

The protein resides in the cell membrane. It localises to the golgi apparatus membrane. The enzyme catalyses GTP + H2O = GDP + phosphate + H(+). Alternates between an inactive form bound to GDP and an active form bound to GTP. Activated by a guanine nucleotide-exchange factor (GEF) and inactivated by a GTPase-activating protein (GAP). Its function is as follows. Ras proteins bind GDP/GTP and possess intrinsic GTPase activity. This is GTPase NRas (NRAS) from Gallus gallus (Chicken).